The following is a 101-amino-acid chain: NAD(P)H-quinone oxidoreductase subunit 4L, chloroplastic (101 aa).

The next 3 helical transmembrane spans lie at 2-22, 32-52, and 61-81; these read MLEH…YGLI, MCLE…SDFF, and IFSI…LAIV.

Belongs to the complex I subunit 4L family. As to quaternary structure, NDH is composed of at least 16 different subunits, 5 of which are encoded in the nucleus.

Its subcellular location is the plastid. It localises to the chloroplast thylakoid membrane. It carries out the reaction a plastoquinone + NADH + (n+1) H(+)(in) = a plastoquinol + NAD(+) + n H(+)(out). It catalyses the reaction a plastoquinone + NADPH + (n+1) H(+)(in) = a plastoquinol + NADP(+) + n H(+)(out). Functionally, NDH shuttles electrons from NAD(P)H:plastoquinone, via FMN and iron-sulfur (Fe-S) centers, to quinones in the photosynthetic chain and possibly in a chloroplast respiratory chain. The immediate electron acceptor for the enzyme in this species is believed to be plastoquinone. Couples the redox reaction to proton translocation, and thus conserves the redox energy in a proton gradient. This is NAD(P)H-quinone oxidoreductase subunit 4L, chloroplastic from Cicer arietinum (Chickpea).